Consider the following 233-residue polypeptide: EEF1A lysine methyltransferase 2 (233 aa).

It belongs to the class I-like SAM-binding methyltransferase superfamily. EFM4 family.

The protein localises to the cytoplasm. Its subcellular location is the nucleus. The catalysed reaction is L-lysyl-[protein] + 3 S-adenosyl-L-methionine = N(6),N(6),N(6)-trimethyl-L-lysyl-[protein] + 3 S-adenosyl-L-homocysteine + 3 H(+). Protein-lysine methyltransferase that selectively catalyzes the trimethylation of EEF1A at 'Lys-318'. In Danio rerio (Zebrafish), this protein is EEF1A lysine methyltransferase 2.